Consider the following 362-residue polypeptide: MSDRVQRPIRVLVVDDSAFMRKVLTELLESDPLITVVGTARDGQDGLEKVLQLQPDVVTLDIEMPRLDGYGTLREIMARRPTPVVMVSSHTREGAEATIRALALGAVDFVAKPSGSISLNMHVARDELVAKVKAAAAATPRVRTAAVELAPVSPREKMQALAGLRRQTGFGDRLPRRLVLIGCSTGGPGALHQIIPRLPADLPAGVLVVQHMPPGFTRSLAQRLDELSAISVREARAGDPVRAGQVLVAPGGYHMLVDAEGRIALDQGPPVHGVRPAVDVTFESVLPVWKERLVGVILTGMGYDGAKGMAQLRKAGGWTIAEDASTCVVYGMPRVVVELGAAREVLPVHSIADAITRAVGEG.

In terms of domain architecture, Response regulatory spans arginine 10 to glutamate 127. Position 61 is a 4-aspartylphosphate (aspartate 61). In terms of domain architecture, CheB-type methylesterase spans arginine 173–glycine 362. Residues serine 184, histidine 211, and aspartate 304 contribute to the active site.

It belongs to the CheB family. Phosphorylated by CheA. Phosphorylation of the N-terminal regulatory domain activates the methylesterase activity.

It is found in the cytoplasm. The catalysed reaction is [protein]-L-glutamate 5-O-methyl ester + H2O = L-glutamyl-[protein] + methanol + H(+). The enzyme catalyses L-glutaminyl-[protein] + H2O = L-glutamyl-[protein] + NH4(+). Involved in chemotaxis. Part of a chemotaxis signal transduction system that modulates chemotaxis in response to various stimuli. Catalyzes the demethylation of specific methylglutamate residues introduced into the chemoreceptors (methyl-accepting chemotaxis proteins or MCP) by CheR. Also mediates the irreversible deamidation of specific glutamine residues to glutamic acid. This chain is Protein-glutamate methylesterase/protein-glutamine glutaminase, found in Symbiobacterium thermophilum (strain DSM 24528 / JCM 14929 / IAM 14863 / T).